Reading from the N-terminus, the 339-residue chain is tRNA (cytidine(56)-2'-O)-methyltransferase (339 aa).

S-adenosyl-L-methionine contacts are provided by residues leucine 79 and 105–109 (GSEKV). The 108-residue stretch at 188–295 (LIEHVKAVEG…VAQADNLFAG (108 aa)) folds into the HD domain.

This sequence belongs to the aTrm56 family. As to quaternary structure, homodimer.

It localises to the cytoplasm. It carries out the reaction cytidine(56) in tRNA + S-adenosyl-L-methionine = 2'-O-methylcytidine(56) in tRNA + S-adenosyl-L-homocysteine + H(+). Specifically catalyzes the AdoMet-dependent 2'-O-ribose methylation of cytidine at position 56 in tRNAs. The polypeptide is tRNA (cytidine(56)-2'-O)-methyltransferase (Thermoplasma acidophilum (strain ATCC 25905 / DSM 1728 / JCM 9062 / NBRC 15155 / AMRC-C165)).